The primary structure comprises 125 residues: Large ribosomal subunit protein uL18 (125 aa).

This sequence belongs to the universal ribosomal protein uL18 family. As to quaternary structure, part of the 50S ribosomal subunit; part of the 5S rRNA/L5/L18/L25 subcomplex. Contacts the 5S and 23S rRNAs.

This is one of the proteins that bind and probably mediate the attachment of the 5S RNA into the large ribosomal subunit, where it forms part of the central protuberance. This chain is Large ribosomal subunit protein uL18, found in Anaplasma marginale (strain Florida).